The following is an 848-amino-acid chain: Neuroligin-3 (848 aa).

An N-terminal signal peptide occupies residues 1–37 (MWLQLGLPSLSLSPTPTVGRSLCLILWFLSLVLRAST). Topologically, residues 38–709 (QAPAPTVNTH…NPRDYSTELS (672 aa)) are extracellular. Asn-98 is a glycosylation site (N-linked (GlcNAc...) asparagine). Cysteines 106 and 141 form a disulfide. Positions 169–195 (CRKGGSGAKKQGEDLADNDGDEDEDIR) are disordered. Acidic residues predominate over residues 182-194 (DLADNDGDEDEDI). Disulfide bonds link Cys-340/Cys-351 and Cys-510/Cys-544. Asn-545 carries an N-linked (GlcNAc...) asparagine glycan. Composition is skewed to polar residues over residues 645–656 (TKVPPPDTTHSS) and 677–689 (AYSN…SWNG). Positions 645–691 (TKVPPPDTTHSSHITRRPNGKTWSTKRPAISPAYSNENAPGSWNGDQ) are disordered. A helical membrane pass occupies residues 710–730 (VTIAVGASLLFLNVLAFAALY). Residues 731–848 (YRKDKRRQEP…LPNSHSTTRV (118 aa)) are Cytoplasmic-facing. Phosphoserine is present on Ser-745. Position 792 is a phosphotyrosine (Tyr-792).

It belongs to the type-B carboxylesterase/lipase family. In terms of assembly, homodimer, and heterodimer with NLGN1 and NLGN2. Interacts with neurexins NRXN1, NRXN2 and NRXN3. Interaction with neurexins is mediated by heparan sulfate glycan modification on neurexin. Interacts (via its C-terminus) with DLG4/PSD-95 (via PDZ domain 3). Post-translationally, the N-terminus is blocked. As to expression, detected in brain and on hippocampus neurons, especially at excitatory synapses. Detected in retina (at protein level). Expressed in brain, spinal cord and dorsal root ganglion.

The protein localises to the cell membrane. It is found in the synapse. In terms of biological role, cell surface protein involved in cell-cell-interactions via its interactions with neurexin family members. Plays a role in synapse function and synaptic signal transmission, and probably mediates its effects by recruiting and clustering other synaptic proteins. May promote the initial formation of synapses, but is not essential for this. May also play a role in glia-glia or glia-neuron interactions in the developing peripheral nervous system. This Rattus norvegicus (Rat) protein is Neuroligin-3 (Nlgn3).